The chain runs to 251 residues: S-acyl fatty acid synthase thioesterase, medium chain (251 aa).

Catalysis depends on residues serine 90 and histidine 226.

This sequence belongs to the thioesterase family.

It carries out the reaction (9Z)-octadecenoyl-[ACP] + H2O = (9Z)-octadecenoate + holo-[ACP] + H(+). In terms of biological role, in fatty acid biosynthesis chain termination and release of the free fatty acid product is achieved by hydrolysis of the thio ester by a thioesterase I, a component of the fatty acid synthetase complex. The chain length of the released fatty acid is usually C16. However, in the mammary glands of non-ruminant mammals, and in the uropygial gland of certain waterfowl there exists a second thioesterase which releases medium-chain length fatty acids (C8 to C2). In Anas platyrhynchos (Mallard), this protein is S-acyl fatty acid synthase thioesterase, medium chain.